Reading from the N-terminus, the 176-residue chain is MAITGIFFGSDTGNTENIAKMIQKQLGKDVADVHDIAKSSKEDLEGYDILLLGIPTWYYGEAQCDWDDFFPTLEEIDFNGKLVALFGCGDQEDYAEYFCDALGTIRDIIEPRGATIVGHWPTAGYHFEASKGLADDDHFVGLAIDEDRQPELTAERVEKWVKQVSAELHLDDILNA.

The 162-residue stretch at 4–165 folds into the Flavodoxin-like domain; that stretch reads TGIFFGSDTG…RVEKWVKQVS (162 aa).

The protein belongs to the flavodoxin family. Requires FMN as cofactor.

Its function is as follows. Low-potential electron donor to a number of redox enzymes (Potential). Involved in the reactivation of inactive cob(II)alamin in methionine synthase. The protein is Flavodoxin 1 (fldA) of Salmonella typhimurium (strain LT2 / SGSC1412 / ATCC 700720).